A 258-amino-acid polypeptide reads, in one-letter code: Type II restriction enzyme HindII (258 aa).

It catalyses the reaction Endonucleolytic cleavage of DNA to give specific double-stranded fragments with terminal 5'-phosphates.. A P subtype restriction enzyme that recognizes the double-stranded sequence 5'-GTYRAC-3' and cleaves after Y-3. In Haemophilus influenzae (strain ATCC 51907 / DSM 11121 / KW20 / Rd), this protein is Type II restriction enzyme HindII (hindIIR).